The primary structure comprises 478 residues: MATDSWALAVDEQEAAVKSMSNLQIKEEKVKPDTNGVIKTNATPEKTDEEEKEDRAAQSLLNKLIRSNLVDNTNQVEVLQRDPNSPLYSVKSFEELRLKPQLLQGVYAMGFNRPSKIQENALPMMLAEPPQNLIAQSQSGTGKTAAFVLAMLSRVEPAERYPQCLCLSPTYELALQTGKVIEQMGKFHPELKLAYAVRGNKLERGQKISEHIVIGTPGTVLDWCSKLKFIDPKKIKVFVLDEADVMIATQGHQDQSIRIQRMLPRNCQMLLFSATFEDSVWKFAQKVVPDPNIIKLKREEETLDTIKQYYVLCNSRDEKFQALCNIYGAITIAQAMIFCHTRKTASWLAAELSKEGHQVALLSGEMVVEQRAAVIERFREGKEKVLVTTNVCARGIDVEQVSVVINFDLPVDKDGNPDNETYLHRIGRTGRFGKRGLAVNMVDSKHSMNILNRIQEHFNKKIERLDTDDLDEIEKIAN.

A2 is subject to N-acetylalanine. An N-terminal lobe region spans residues A2–E299. A Glycyl lysine isopeptide (Lys-Gly) (interchain with G-Cter in SUMO1); alternate cross-link involves residue K26. K26 participates in a covalent cross-link: Glycyl lysine isopeptide (Lys-Gly) (interchain with G-Cter in SUMO2); alternate. Residues K31–R55 are disordered. The segment at D54 to S67 is N-terminal helix. The short motif at K91–E119 is the Q motif element. Residues Q118 and S137–T144 contribute to the ATP site. The Helicase ATP-binding domain maps to M124–I294. A DEAD box motif is present at residues D241–D244. A C-terminal lobe region spans residues E300–N478. Residues T305–I473 enclose the Helicase C-terminal domain. Residues R428 and R431 each coordinate ATP.

It belongs to the DEAD box helicase family. DDX19/DBP5 subfamily.

The protein resides in the cytoplasm. It is found in the nucleus. The protein localises to the nucleoplasm. It catalyses the reaction ATP + H2O = ADP + phosphate + H(+). ATP-dependent RNA helicase involved in mRNA export from the nucleus. Rather than unwinding RNA duplexes, DDX19 functions as a remodeler of ribonucleoprotein particles, whereby proteins bound to nuclear mRNA are dissociated and replaced by cytoplasmic mRNA binding proteins. This is ATP-dependent RNA helicase DDX19A (DDX19A) from Bos taurus (Bovine).